Here is a 1715-residue protein sequence, read N- to C-terminus: Neurexin-2 (1715 aa).

Residues 1–29 (MALGSRWRPPPQLPPLLLLLALVAGVRGL) form the signal peptide. Residues 30–206 (EFGGGPGQWA…LRGAAADPLC (177 aa)) form the Laminin G-like 1 domain. Residues 30-1639 (EFGGGPGQWA…EVIRESSSTT (1610 aa)) lie on the Extracellular side of the membrane. An N-linked (GlcNAc...) asparagine glycan is attached at Asn60. The EGF-like 1 domain occupies 202 to 242 (ADPLCAPARNPCANGGLCTVLAPGEVGCDCSHTGFGGKFCS). Intrachain disulfides connect Cys206/Cys219, Cys213/Cys229, and Cys231/Cys241. 2 Laminin G-like domains span residues 289-486 (VATF…SFRC) and 493-686 (DPVT…APFC). Asp335 provides a ligand contact to Ca(2+). Asn338 carries N-linked (GlcNAc...) asparagine glycosylation. Residues Leu352 and Met420 each contribute to the Ca(2+) site. Cystine bridges form between Cys450-Cys486, Cys657-Cys686, Cys694-Cys705, Cys699-Cys714, and Cys716-Cys726. The EGF-like 2 domain maps to 690–727 (TLKQCASAPCRNGGICREGWNRFVCDCIGTGFLGRVCE). Laminin G-like domains lie at 732 to 907 (VLSY…ITYC) and 921 to 1096 (DPVT…ERGC). Ca(2+) is bound by residues Asp779 and Leu796. Asn844 carries N-linked (GlcNAc...) asparagine glycosylation. Arg857 provides a ligand contact to Ca(2+). 4 disulfide bridges follow: Cys1068–Cys1096, Cys1103–Cys1114, Cys1108–Cys1123, and Cys1125–Cys1135. The region spanning 1099–1136 (PSTTCTEESCANQGVCLQQWDGFTCDCTMTSYGGPVCN) is the EGF-like 3 domain. Residues 1140 to 1348 (TTYIFGKGGA…HLRLVGEGPS (209 aa)) enclose the Laminin G-like 6 domain. Positions 1192 and 1209 each coordinate Ca(2+). Asn1239 carries N-linked (GlcNAc...) asparagine glycosylation. Ca(2+)-binding residues include Ile1291 and Asn1293. O-linked (Xyl...) (heparan sulfate) serine glycosylation occurs at Ser1403. Disordered stretches follow at residues 1461-1511 (ATQD…LPPT), 1529-1549 (LLSPRKPAPRPNLRTDGATGA), and 1583-1626 (LGPG…RGPP). A helical transmembrane segment spans residues 1640–1660 (GMVVGIVAAAALCILILLYAM). Topologically, residues 1661-1715 (YKYRNRDEGSYQVDQSRNYISNSAQSNGAVVKEKAPAAPKTPSKAKKNKDKEYYV) are cytoplasmic. Residues 1682-1715 (NSAQSNGAVVKEKAPAAPKTPSKAKKNKDKEYYV) form a disordered region.

It belongs to the neurexin family. As to quaternary structure, the laminin G-like domain 1 binds to NXPH1. Interacts with PATJ. Interacts with CBLN1, CBLN2 and, less avidly, with CBLN4. Specific isoforms bind neuroligins NLGN1, NLGN2 and NLGN3. Isoform 5c/alpha-2C binds to alpha-dystroglycan. Interacts (via Laminin G-like 1 domain) with IGSF21 (Ig-like 1 domain) in a trans-interaction manner. Interacts with CLSTN3. O-glycosylated; contains heparan sulfate. Heparan sulfate attachment is required for synapse development by mediating interactions with neuroligins. Brain (neuronal synapse).

It is found in the presynaptic cell membrane. Its function is as follows. Neuronal cell surface protein that may be involved in cell recognition and cell adhesion. May mediate intracellular signaling. This is Neurexin-2 (Nrxn2) from Rattus norvegicus (Rat).